A 159-amino-acid chain; its full sequence is Ribosomal RNA large subunit methyltransferase H (159 aa).

S-adenosyl-L-methionine-binding positions include L76, G108, and 127–132; that span reads FSKMTF.

It belongs to the RNA methyltransferase RlmH family. In terms of assembly, homodimer.

The protein localises to the cytoplasm. The enzyme catalyses pseudouridine(1915) in 23S rRNA + S-adenosyl-L-methionine = N(3)-methylpseudouridine(1915) in 23S rRNA + S-adenosyl-L-homocysteine + H(+). Its function is as follows. Specifically methylates the pseudouridine at position 1915 (m3Psi1915) in 23S rRNA. The polypeptide is Ribosomal RNA large subunit methyltransferase H (Clostridium kluyveri (strain NBRC 12016)).